The following is a 111-amino-acid chain: MAQARTEFSKVAAPRKLEEMYAQRGDLFPYLLAVLVLLTLVSVFHVWSRVRVVDLNLEVAEVARQLKVAQEEQNRLKLEVASLKTPARIEAVAKGELGMALPTDQQVVVVK.

Over 1–26 (MAQARTEFSKVAAPRKLEEMYAQRGD) the chain is Cytoplasmic. A helical membrane pass occupies residues 27–47 (LFPYLLAVLVLLTLVSVFHVW). Residues 48 to 111 (SRVRVVDLNL…PTDQQVVVVK (64 aa)) lie on the Periplasmic side of the membrane. Residues 51 to 85 (RVVDLNLEVAEVARQLKVAQEEQNRLKLEVASLKT) adopt a coiled-coil conformation.

The protein belongs to the FtsL family.

It localises to the cell inner membrane. Its function is as follows. Essential cell division protein. This Geobacter sulfurreducens (strain ATCC 51573 / DSM 12127 / PCA) protein is Cell division protein FtsL.